The sequence spans 58 residues: Apelin receptor early endogenous ligand (58 aa).

An N-terminal signal peptide occupies residues 1-22; sequence MRFFHPLYLLLLLLTVLVLISA.

The protein belongs to the Elabela/Toddler family. As to quaternary structure, interacts with aplnra and aplnrb. Expressed ubiquitously during late blastula and gastrula stages and becomes restricted to the lateral mesoderm, endoderm, and anterior and posterior notochord after gastrulation.

It localises to the secreted. It is found in the extracellular space. In terms of biological role, peptide hormone that functions as endogenous ligand for the G-protein-coupled apelin receptor (aplnra and/or aplnrb), that plays a role in the regulation of normal cardiovascular function and fluid homeostasis. Functions as a balanced agonist activating both G(i) protein pathway and beta-arrestin pathway of APLNR. Downstream G proteins activation, apelin can inhibit cAMP production and activate key intracellular effectors such as ERKs. On the other hand, APLNR activation induces beta-arrestin recruitment to the membrane leading to desensitization and internalization of the receptor. Required for mesendodermal differentiation, blood vessels formation and heart morphogenesis during early development and for adult cardiovascular homeostasis. Acts as a motogen by promoting mesendodermal cell migration during gastrulation by binding and activating the apelin receptor. Acts as an early embryonic regulator of cellular movement with a role in migration and development of cardiac progenitor cells. May act as a chemoattractant for the activation of angioblast migration toward the embryonic midline, i.e. the position of the future vessel formation, during vasculogenesis. Positively regulates sinus venosus (SV)-derived endothelial cells migration into the developing heart to promote coronary blood vessel sprouting. Involved in cardioprotective functions during heart failure. Mediates myocardial contractility in an ERK1/2-dependent manner. This is Apelin receptor early endogenous ligand from Danio rerio (Zebrafish).